Here is a 208-residue protein sequence, read N- to C-terminus: NAD(P)H dehydrogenase (quinone) (208 aa).

A Flavodoxin-like domain is found at V4–V192. FMN contacts are provided by residues S10–V15 and T78–F80. NAD(+) is bound at residue Y12. W98 contacts substrate. FMN contacts are provided by residues S113–G119 and H134. The interval Y161–D183 is disordered.

The protein belongs to the WrbA family. It depends on FMN as a cofactor.

The catalysed reaction is a quinone + NADH + H(+) = a quinol + NAD(+). The enzyme catalyses a quinone + NADPH + H(+) = a quinol + NADP(+). This is NAD(P)H dehydrogenase (quinone) from Paracoccus denitrificans (strain Pd 1222).